The sequence spans 167 residues: Ubiquitin-fold modifier-conjugating enzyme 1 (167 aa).

The Glycyl thioester intermediate role is filled by Cys-116. Lys-122 is covalently cross-linked (Glycyl lysine isopeptide (Lys-Gly) (interchain with G-Cter in UFM1)).

The protein belongs to the ubiquitin-conjugating enzyme family. UFC1 subfamily. In terms of assembly, interacts with UBA5 (via C-terminus). Interacts with UFL1. Interacts with UFM1. Interacts with KIRREL3. Ufmylated at Lys-122. Deufmylated by UFSP1.

Functionally, E2-like enzyme which specifically catalyzes the second step in ufmylation. Accepts the ubiquitin-like modifier UFM1 from the E1 enzyme UBA5 and forms an intermediate with UFM1 via a thioester linkage. Ufmylation is involved in various processes, such as ribosome recycling, response to DNA damage, interferon response or reticulophagy (also called ER-phagy). This chain is Ubiquitin-fold modifier-conjugating enzyme 1, found in Mus musculus (Mouse).